The following is a 271-amino-acid chain: p-hydroxybenzoate hydroxylase transcriptional activator (271 aa).

The HTH iclR-type domain occupies 23-83 (IAGLAKGLAL…TDEHYFWLTH (61 aa)). A DNA-binding region (H-T-H motif) is located at residues 45–64 (VTQVAERTGISRTAARRYLK). Residues 98 to 271 (LPKVAQSFLN…NTANELRNLV (174 aa)) form the IclR-ED domain.

In terms of biological role, positive regulator of the pobA gene for p-hydroxybenzoate hydroxylase. The sequence is that of p-hydroxybenzoate hydroxylase transcriptional activator (pobR) from Acinetobacter baylyi (strain ATCC 33305 / BD413 / ADP1).